Here is a 165-residue protein sequence, read N- to C-terminus: Probable DNA polymerase III subunit chi (165 aa).

This sequence belongs to the DNA polymerase III chi/HolC chain family. In terms of assembly, DNA polymerase III contains a core (composed of alpha, epsilon and theta chains) that associates with a tau subunit. This core dimerizes to form the POLIII' complex. PolIII' associates with the gamma complex (composed of gamma, delta, delta', psi and chi chains) and with the beta chain to form the complete DNA polymerase III complex. Interacts directly with the psi subunit (holD). The only subunit of the DNA polymerase III holoenzyme known to interact with single-stranded DNA binding protein (SSB).

The catalysed reaction is DNA(n) + a 2'-deoxyribonucleoside 5'-triphosphate = DNA(n+1) + diphosphate. Functionally, part of the beta sliding clamp loading complex, which hydrolyzes ATP to load the beta clamp onto primed DNA to form the DNA replication pre-initiation complex. DNA polymerase III is a complex, multichain enzyme responsible for most of the replicative synthesis in bacteria. This DNA polymerase also exhibits 3' to 5' exonuclease activity. In Rickettsia prowazekii (strain Madrid E), this protein is Probable DNA polymerase III subunit chi.